A 215-amino-acid chain; its full sequence is UPF0502 protein YceH (215 aa).

K80 is modified (N6-acetyllysine).

Belongs to the UPF0502 family.

This chain is UPF0502 protein YceH, found in Escherichia coli (strain K12 / MC4100 / BW2952).